Consider the following 371-residue polypeptide: E3 ubiquitin-protein ligase RHF1A (371 aa).

The segment at 46–87 (CSICLEPFTLQDPSTVTSCKHEYHLQCIIEWSQRSKECPICW) adopts an RING-type; atypical zinc-finger fold. Disordered regions lie at residues 199-254 (HQNS…SSLP) and 348-371 (EANS…GETC). The span at 200-225 (QNSNPCPSPGSMTPSPVSGHSSIPAD) shows a compositional bias: polar residues. Residues 226-252 (SNNGSRISPGPSPSRSSQSPKSPEASS) are compositionally biased toward low complexity.

Interacts with KRP6. Expressed in stems, flowers, green siliques, cauline leaves, seeds and roots.

It carries out the reaction S-ubiquitinyl-[E2 ubiquitin-conjugating enzyme]-L-cysteine + [acceptor protein]-L-lysine = [E2 ubiquitin-conjugating enzyme]-L-cysteine + N(6)-ubiquitinyl-[acceptor protein]-L-lysine.. The protein operates within protein modification; protein ubiquitination. E3 ubiquitin-protein ligase involved in the positive regulation of the gametogenesis progression. Mediates the proteasomal degradation of KRP6, a cyclin-dependent kinase inhibitor which accumulates during meiosis and blocks the progression of subsequent mitoses during gametophyte development. Functions in association with RHF2A. Possesses E3 ubiquitin-protein ligase activity when associated with the E2 enzyme UBC8 in vitro. This is E3 ubiquitin-protein ligase RHF1A from Arabidopsis thaliana (Mouse-ear cress).